The following is a 592-amino-acid chain: Cell division protein FtsZ (592 aa).

Residues 24 to 28, 111 to 113, glutamate 142, arginine 146, and aspartate 190 contribute to the GTP site; these read GGGGN and GTG. The disordered stretch occupies residues 333–362; the sequence is KFQKSVSSVRKNDSGINQTASHPQSSQLRS.

This sequence belongs to the FtsZ family. In terms of assembly, homodimer. Polymerizes to form a dynamic ring structure in a strictly GTP-dependent manner. Interacts directly with several other division proteins.

The protein localises to the cytoplasm. Its function is as follows. Essential cell division protein that forms a contractile ring structure (Z ring) at the future cell division site. The regulation of the ring assembly controls the timing and the location of cell division. One of the functions of the FtsZ ring is to recruit other cell division proteins to the septum to produce a new cell wall between the dividing cells. Binds GTP and shows GTPase activity. The protein is Cell division protein FtsZ of Bartonella bacilliformis.